The primary structure comprises 79 residues: Inhibitor of host cell division protein (79 aa).

Positions 15-35 (RQQRSAMLEQEQAEKDKKERR) form a coiled coil. The helical transmembrane segment at 37-57 (AGLLFFGTIVVLVAVVAVYIV) threads the bilayer.

The protein resides in the host membrane. Inhibits host cell division leading to filamentation. Does not prevent host cell growth, DNA synthesis or chromosome segregation. Does not seem to be essential for productive bacterial host infection. In Bacillus subtilis (Bacteriophage SP01), this protein is Inhibitor of host cell division protein.